Consider the following 631-residue polypeptide: Translation factor GUF1, mitochondrial (631 aa).

The transit peptide at 1 to 19 directs the protein to the mitochondrion; it reads MFNRRLLRHVRYAFQQVRS. Residues 33-214 form the tr-type G domain; the sequence is ERYRNFSIVA…AIVDRIPPPT (182 aa). GTP is bound by residues 42-49, 107-111, and 161-164; these read AHVDHGKS, DTPGH, and NKID.

This sequence belongs to the TRAFAC class translation factor GTPase superfamily. Classic translation factor GTPase family. LepA subfamily.

Its subcellular location is the mitochondrion inner membrane. The catalysed reaction is GTP + H2O = GDP + phosphate + H(+). Functionally, promotes mitochondrial protein synthesis. May act as a fidelity factor of the translation reaction, by catalyzing a one-codon backward translocation of tRNAs on improperly translocated ribosomes. Binds to mitochondrial ribosomes in a GTP-dependent manner. The sequence is that of Translation factor GUF1, mitochondrial from Kluyveromyces lactis (strain ATCC 8585 / CBS 2359 / DSM 70799 / NBRC 1267 / NRRL Y-1140 / WM37) (Yeast).